Consider the following 63-residue polypeptide: UPF0434 protein GDI0182/Gdia_2252 (63 aa).

This sequence belongs to the UPF0434 family.

The polypeptide is UPF0434 protein GDI0182/Gdia_2252 (Gluconacetobacter diazotrophicus (strain ATCC 49037 / DSM 5601 / CCUG 37298 / CIP 103539 / LMG 7603 / PAl5)).